The chain runs to 396 residues: Succinyl-CoA:mesaconate CoA-transferase (396 aa).

Asp175 functions as the Nucleophile in the catalytic mechanism.

The protein belongs to the CoA-transferase III family.

It catalyses the reaction mesaconate + succinyl-CoA = 2-methylfumaryl-CoA + succinate. Involved in the methylaspartate cycle. Catalyzes the transfer of the CoA moiety from succinyl-CoA to mesaconate to generate mesaconyl-CoA (2-methylfumaryl-CoA) and succinate. This is Succinyl-CoA:mesaconate CoA-transferase from Haloarcula marismortui (strain ATCC 43049 / DSM 3752 / JCM 8966 / VKM B-1809) (Halobacterium marismortui).